We begin with the raw amino-acid sequence, 164 residues long: Phosphopantetheine adenylyltransferase (164 aa).

Ser10 contacts substrate. ATP contacts are provided by residues 10 to 11 and His18; that span reads SF. Residues Lys42, Met74, and Arg88 each coordinate substrate. ATP is bound by residues 89–91, Glu99, and 124–130; these read GLR and YFFVSAR.

This sequence belongs to the bacterial CoaD family. In terms of assembly, homohexamer. Mg(2+) is required as a cofactor.

The protein localises to the cytoplasm. The catalysed reaction is (R)-4'-phosphopantetheine + ATP + H(+) = 3'-dephospho-CoA + diphosphate. It functions in the pathway cofactor biosynthesis; coenzyme A biosynthesis; CoA from (R)-pantothenate: step 4/5. Reversibly transfers an adenylyl group from ATP to 4'-phosphopantetheine, yielding dephospho-CoA (dPCoA) and pyrophosphate. The chain is Phosphopantetheine adenylyltransferase from Anaeromyxobacter dehalogenans (strain 2CP-1 / ATCC BAA-258).